Here is a 184-residue protein sequence, read N- to C-terminus: Adenylate kinase 1 (184 aa).

11-16 (GAGKGT) contacts ATP. The tract at residues 31 to 60 (STGDILRQAMKEQTPLGIKAQSYVDSGELV) is NMP. AMP contacts are provided by residues Thr-32, Arg-37, 58-60 (ELV), 86-89 (GFPR), and Gln-93. The interval 127–133 (SRGRKDD) is LID. Residue Arg-128 participates in ATP binding. AMP is bound by residues Arg-130 and Arg-141. Gln-169 lines the ATP pocket.

Belongs to the adenylate kinase family. In terms of assembly, monomer.

The protein resides in the cytoplasm. The enzyme catalyses AMP + ATP = 2 ADP. Its pathway is purine metabolism; AMP biosynthesis via salvage pathway; AMP from ADP: step 1/1. Functionally, catalyzes the reversible transfer of the terminal phosphate group between ATP and AMP. Plays an important role in cellular energy homeostasis and in adenine nucleotide metabolism. This is Adenylate kinase 1 from Nostoc sp. (strain PCC 7120 / SAG 25.82 / UTEX 2576).